A 674-amino-acid polypeptide reads, in one-letter code: DNA ligase (674 aa).

Residues 34–38 (DSEYD), 83–84 (SL), and glutamate 114 contribute to the NAD(+) site. Lysine 116 serves as the catalytic N6-AMP-lysine intermediate. NAD(+)-binding residues include arginine 137, glutamate 174, lysine 290, and lysine 314. Cysteine 405, cysteine 408, cysteine 424, and cysteine 429 together coordinate Zn(2+). Positions 587 to 674 (QSGTQFDGKM…KLSLIENTKF (88 aa)) constitute a BRCT domain.

It belongs to the NAD-dependent DNA ligase family. LigA subfamily. The cofactor is Mg(2+). Mn(2+) serves as cofactor.

The enzyme catalyses NAD(+) + (deoxyribonucleotide)n-3'-hydroxyl + 5'-phospho-(deoxyribonucleotide)m = (deoxyribonucleotide)n+m + AMP + beta-nicotinamide D-nucleotide.. Its function is as follows. DNA ligase that catalyzes the formation of phosphodiester linkages between 5'-phosphoryl and 3'-hydroxyl groups in double-stranded DNA using NAD as a coenzyme and as the energy source for the reaction. It is essential for DNA replication and repair of damaged DNA. The chain is DNA ligase from Endomicrobium trichonymphae.